The chain runs to 245 residues: 1-(5-phosphoribosyl)-5-[(5-phosphoribosylamino)methylideneamino] imidazole-4-carboxamide isomerase (245 aa).

The active-site Proton acceptor is Asp7. Asp129 (proton donor) is an active-site residue.

The protein belongs to the HisA/HisF family.

Its subcellular location is the cytoplasm. The catalysed reaction is 1-(5-phospho-beta-D-ribosyl)-5-[(5-phospho-beta-D-ribosylamino)methylideneamino]imidazole-4-carboxamide = 5-[(5-phospho-1-deoxy-D-ribulos-1-ylimino)methylamino]-1-(5-phospho-beta-D-ribosyl)imidazole-4-carboxamide. It functions in the pathway amino-acid biosynthesis; L-histidine biosynthesis; L-histidine from 5-phospho-alpha-D-ribose 1-diphosphate: step 4/9. The sequence is that of 1-(5-phosphoribosyl)-5-[(5-phosphoribosylamino)methylideneamino] imidazole-4-carboxamide isomerase from Shewanella sp. (strain MR-7).